The chain runs to 206 residues: Triosephosphate isomerase (206 aa).

His-76 serves as the catalytic Electrophile. The Proton acceptor role is filled by Glu-146.

Belongs to the triosephosphate isomerase family. In terms of assembly, homodimer.

It carries out the reaction D-glyceraldehyde 3-phosphate = dihydroxyacetone phosphate. The protein operates within carbohydrate biosynthesis; gluconeogenesis. It participates in carbohydrate degradation; glycolysis; D-glyceraldehyde 3-phosphate from glycerone phosphate: step 1/1. This Anopheles merus (Mosquito) protein is Triosephosphate isomerase (Tpi).